The following is a 583-amino-acid chain: Inactive tyrosine-protein kinase RYK (583 aa).

The first 18 residues, 1-18, serve as a signal peptide directing secretion; it reads MILRYLIFFAQLWALCLA. At 19–173 the chain is on the extracellular side; the sequence is NVNMFISKEE…EVDDTDSIDK (155 aa). One can recognise a WIF domain in the interval 22-147; sequence MFISKEEMNR…KVKLRQEKIC (126 aa). N-linked (GlcNAc...) asparagine glycans are attached at residues asparagine 30 and asparagine 46. Cysteine 113 and cysteine 147 are disulfide-bonded. Residues 174–194 traverse the membrane as a helical segment; sequence AFFVIICIAAAFLLIVAATLI. The Cytoplasmic portion of the chain corresponds to 195–583; the sequence is CYFKRSKKED…DFNIQLSQYI (389 aa). Residues 281 to 583 form the Protein kinase domain; sequence FQSLPLDMEG…DFNIQLSQYI (303 aa). Residues 287-295 and lysine 327 contribute to the ATP site; that span reads DMEGTFGEV.

This sequence belongs to the protein kinase superfamily. Tyr protein kinase family.

The protein resides in the cell membrane. It localises to the basolateral cell membrane. Functionally, has no detectable kinase activity in vitro and is unlikely to function as a tyrosine kinase in vivo. Receptor which may act as a receptor for Wnt ligand mom-2. Plays a role in controlling P7.p vulva precursor cell lineage orientation during vulva development. Regulates pop-1 asymmetric distribution in P7.p and its daughter cells. Plays a role in the migration of ALM neurons during embryogenesis. The sequence is that of Inactive tyrosine-protein kinase RYK from Caenorhabditis elegans.